Consider the following 477-residue polypeptide: Cytochrome P450 708A2 (477 aa).

Residues 3–23 traverse the membrane as a helical segment; sequence FVWSAAVWVIAVAAVVISKWL. Heme is bound at residue cysteine 426.

The protein belongs to the cytochrome P450 family. The cofactor is heme. As to expression, expressed primarily in the root epidermis.

Its subcellular location is the membrane. Functionally, hydroxylates thalianol into thalian-diol. The protein is Cytochrome P450 708A2 (CYP708A2) of Arabidopsis thaliana (Mouse-ear cress).